Consider the following 365-residue polypeptide: Probable dual-specificity RNA methyltransferase RlmN (365 aa).

Glu-99 functions as the Proton acceptor in the catalytic mechanism. In terms of domain architecture, Radical SAM core spans 105 to 344 (QSYGLSVCVT…CVVRQEHGTD (240 aa)). A disulfide bond links Cys-112 and Cys-349. Positions 119, 123, and 126 each coordinate [4Fe-4S] cluster. S-adenosyl-L-methionine-binding positions include 171 to 172 (GE), Ser-203, 227 to 229 (SLH), and Asn-305. Residue Cys-349 is the S-methylcysteine intermediate of the active site.

Belongs to the radical SAM superfamily. RlmN family. The cofactor is [4Fe-4S] cluster.

It is found in the cytoplasm. It carries out the reaction adenosine(2503) in 23S rRNA + 2 reduced [2Fe-2S]-[ferredoxin] + 2 S-adenosyl-L-methionine = 2-methyladenosine(2503) in 23S rRNA + 5'-deoxyadenosine + L-methionine + 2 oxidized [2Fe-2S]-[ferredoxin] + S-adenosyl-L-homocysteine. The catalysed reaction is adenosine(37) in tRNA + 2 reduced [2Fe-2S]-[ferredoxin] + 2 S-adenosyl-L-methionine = 2-methyladenosine(37) in tRNA + 5'-deoxyadenosine + L-methionine + 2 oxidized [2Fe-2S]-[ferredoxin] + S-adenosyl-L-homocysteine. Functionally, specifically methylates position 2 of adenine 2503 in 23S rRNA and position 2 of adenine 37 in tRNAs. This chain is Probable dual-specificity RNA methyltransferase RlmN, found in Lactococcus lactis subsp. cremoris (strain SK11).